We begin with the raw amino-acid sequence, 548 residues long: Acetamidase (548 aa).

Active-site charge relay system residues include lysine 129 and serine 204. Serine 228 serves as the catalytic Acyl-ester intermediate.

Belongs to the amidase family.

The enzyme catalyses a monocarboxylic acid amide + H2O = a monocarboxylate + NH4(+). The catalysed reaction is acetamide + H2O = acetate + NH4(+). In terms of biological role, allows acetamide to be used as a sole carbon or nitrogen source. In Emericella nidulans (strain FGSC A4 / ATCC 38163 / CBS 112.46 / NRRL 194 / M139) (Aspergillus nidulans), this protein is Acetamidase (amdS).